We begin with the raw amino-acid sequence, 1033 residues long: Tyrosine-protein kinase-like otk (1033 aa).

The N-terminal stretch at 1 to 22 (MTARMISIYGLVLASMMASVWA) is a signal peptide. At 23–581 (SSSRFQRLPQ…GGDGFLVTRA (559 aa)) the chain is on the extracellular side. 5 consecutive Ig-like C2-type domains span residues 25 to 108 (SRFQ…REAS), 109 to 199 (PPAK…RVMS), 251 to 365 (PEDL…LPIS), 368 to 463 (PGVL…VAIN), and 468 to 558 (PKFS…VQLV). Asn39 is a glycosylation site (N-linked (GlcNAc...) asparagine). 4 cysteine pairs are disulfide-bonded: Cys46-Cys95, Cys137-Cys188, Cys276-Cys354, and Cys399-Cys447. Asn336, Asn417, Asn429, Asn444, Asn457, Asn512, and Asn524 each carry an N-linked (GlcNAc...) asparagine glycan. Cysteines 490 and 542 form a disulfide. A helical transmembrane segment spans residues 582-602 (VLITMTVALAYIVLVVGLMLW). Over 603-1033 (CRYRRQARKA…LSKAMQSVEK (431 aa)) the chain is Cytoplasmic. Disordered regions lie at residues 617 to 679 (LSTK…KKSA) and 718 to 760 (SPTD…KTSM). The segment covering 655–673 (KSSGDAQKSDDTACSQQSR) has biased composition (polar residues). A Phosphoserine modification is found at Ser678. One can recognise a Protein kinase; inactive domain in the interval 692 to 1028 (LSELIQIGRG…QLGAALSKAM (337 aa)). Residues 720–731 (TDKDADTEKQHS) are compositionally biased toward basic and acidic residues.

Belongs to the protein kinase superfamily. Tyr protein kinase family. Insulin receptor subfamily. Interacts with plexA; component of a receptor complex that mediates the repulsive signaling in response to Semaphorin ligands.

It localises to the cell membrane. In terms of biological role, acts as a calcium-dependent, homophilic cell adhesion molecule that regulates neural recognition during the development of the nervous system. Component of the repulsive Plexin signaling response to regulate motor axon guidance at the embryonic stage. Also component of a receptor complex that is required in the adult visual system to innervate the lamina layer; specific targeting of R1-R6 axons. The protein is Tyrosine-protein kinase-like otk of Drosophila erecta (Fruit fly).